An 809-amino-acid chain; its full sequence is Poly(A) polymerase (809 aa).

Residues 1–50 (MNKNGGPPVANITTSSTTITSTTTTQAKSQLPSSLSVNNLHTTQGSTDQP) are disordered. Residues 12–25 (ITTSSTTITSTTTT) show a composition bias toward low complexity. Over residues 26 to 50 (QAKSQLPSSLSVNNLHTTQGSTDQP) the composition is skewed to polar residues. ATP-binding positions include 133–135 (FGS), 146–148 (DID), Asp200, Lys262, Tyr271, and 280–281 (GV). The Mg(2+) site is built by Asp146, Asp148, and Asp200. 2 disordered regions span residues 529–760 (FVKD…QQIQ) and 785–809 (ISSS…IRGN). The segment covering 530 to 540 (VKDEGPEEPVK) has biased composition (basic and acidic residues). A compositionally biased stretch (low complexity) spans 572-655 (SPITTNINST…TPPTTTTINS (84 aa)). The segment covering 656 to 665 (VQPPSAQPTE) has biased composition (polar residues). The segment covering 666-706 (NGSSTSNSPTSTSINNTALPPNPTTNSESTIETTITLPTTL) has biased composition (low complexity). The span at 707–735 (ESQTSTLKDSNEISTNGTAVATEPTITSP) shows a compositional bias: polar residues. Low complexity-rich tracts occupy residues 736-760 (SVNI…QQIQ) and 785-794 (ISSSSETSQS).

The protein belongs to the poly(A) polymerase family. It depends on Mg(2+) as a cofactor. Requires Mn(2+) as cofactor.

The protein resides in the nucleus. The catalysed reaction is RNA(n) + ATP = RNA(n)-3'-adenine ribonucleotide + diphosphate. In terms of biological role, polymerase that creates the 3'-poly(A) tail of mRNA's. May acquire specificity through interaction with a cleavage and polyadenylation factor. The protein is Poly(A) polymerase (papA) of Dictyostelium discoideum (Social amoeba).